A 220-amino-acid polypeptide reads, in one-letter code: MDAKSNAVFWQEKWERGETGFHEPQANPLLTRHIAALDLPAGARIFVPLCGMSQDMVWLAGQGFHVTGCELSDIAVHRFFNDLDLTPDIRDVGPLRCFSAGTIRIFAGNIFDLTPDLLGLMDGIYDRAALIALPEDLRRAYAAHLLSLTGPVPELLVTLDYDQSCLKGPPFSVDEAFLRECYGQAYAFTLLESRAVEGGLKGRCPASENVWRFSPLPPSS.

Positions 14, 49, 70, and 127 each coordinate S-adenosyl-L-methionine.

This sequence belongs to the class I-like SAM-binding methyltransferase superfamily. TPMT family.

The protein localises to the cytoplasm. It catalyses the reaction S-adenosyl-L-methionine + a thiopurine = S-adenosyl-L-homocysteine + a thiopurine S-methylether.. This Gluconobacter oxydans (strain 621H) (Gluconobacter suboxydans) protein is Thiopurine S-methyltransferase.